The chain runs to 115 residues: Large ribosomal subunit protein bL19 (115 aa).

This sequence belongs to the bacterial ribosomal protein bL19 family.

In terms of biological role, this protein is located at the 30S-50S ribosomal subunit interface and may play a role in the structure and function of the aminoacyl-tRNA binding site. The chain is Large ribosomal subunit protein bL19 from Francisella tularensis subsp. tularensis (strain FSC 198).